The primary structure comprises 203 residues: Outer-membrane lipoprotein LolB (203 aa).

The N-terminal stretch at 1-21 (MTGRWSPRLLAGLLAALVLSG) is a signal peptide. A lipid anchor (N-palmitoyl cysteine) is attached at Cys22. Cys22 carries S-diacylglycerol cysteine lipidation.

Belongs to the LolB family. As to quaternary structure, monomer.

Its subcellular location is the cell outer membrane. Functionally, plays a critical role in the incorporation of lipoproteins in the outer membrane after they are released by the LolA protein. The polypeptide is Outer-membrane lipoprotein LolB (Halorhodospira halophila (strain DSM 244 / SL1) (Ectothiorhodospira halophila (strain DSM 244 / SL1))).